The primary structure comprises 205 residues: Large ribosomal subunit protein uL4 (205 aa).

This sequence belongs to the universal ribosomal protein uL4 family. Part of the 50S ribosomal subunit. Contacts proteins L15 and L34.

In terms of biological role, one of the primary rRNA binding proteins, this protein initially binds near the 5'-end of the 23S rRNA. It is important during the early stages of 50S assembly. Makes multiple contacts with different domains of the 23S rRNA in the assembled 50S subunit. Its function is as follows. This protein is located close to the polypeptide exit tunnel, and interacts with the modified macrolide azithromycin, which blocks the tunnel. In Deinococcus radiodurans (strain ATCC 13939 / DSM 20539 / JCM 16871 / CCUG 27074 / LMG 4051 / NBRC 15346 / NCIMB 9279 / VKM B-1422 / R1), this protein is Large ribosomal subunit protein uL4 (rplD).